The sequence spans 476 residues: ATP synthase subunit beta (476 aa).

154–161 is an ATP binding site; that stretch reads GGAGVGKT.

It belongs to the ATPase alpha/beta chains family. In terms of assembly, F-type ATPases have 2 components, CF(1) - the catalytic core - and CF(0) - the membrane proton channel. CF(1) has five subunits: alpha(3), beta(3), gamma(1), delta(1), epsilon(1). CF(0) has three main subunits: a(1), b(2) and c(9-12). The alpha and beta chains form an alternating ring which encloses part of the gamma chain. CF(1) is attached to CF(0) by a central stalk formed by the gamma and epsilon chains, while a peripheral stalk is formed by the delta and b chains.

It is found in the cell inner membrane. The enzyme catalyses ATP + H2O + 4 H(+)(in) = ADP + phosphate + 5 H(+)(out). Produces ATP from ADP in the presence of a proton gradient across the membrane. The catalytic sites are hosted primarily by the beta subunits. This chain is ATP synthase subunit beta, found in Afipia carboxidovorans (strain ATCC 49405 / DSM 1227 / KCTC 32145 / OM5) (Oligotropha carboxidovorans).